Reading from the N-terminus, the 284-residue chain is MKLMVVSGSSGAGKSVALRVLEDLGYYCVDNLPIDLLTQFVESIQHSSQNVAVSVDIRNLPKDPALLKNTLALLKKTHDVTVIFLDAEDKELIKRYSETRRLHPLSLIGEQCSLEQAVTLEKSILSDYREEADLVLDTTTKSIHDLSETLRSRILGRESKELVMVFESFGFKHGLPTDADYVFDVRFLPNPHWEPSLRPMTGLDKPVADYLAKHTEVIQLKEQIQQFLTTWLPALEKNNRSYLTVAIGCTGGQHRSVYITQQLGEYFKQQGKQVQIRHKTLERH.

Residue Gly-8–Ser-15 coordinates ATP. Asp-56–Asn-59 serves as a coordination point for GTP.

It belongs to the RapZ-like family.

In terms of biological role, displays ATPase and GTPase activities. This is Nucleotide-binding protein VF_0384 from Aliivibrio fischeri (strain ATCC 700601 / ES114) (Vibrio fischeri).